A 367-amino-acid polypeptide reads, in one-letter code: Probable peptidoglycan glycosyltransferase FtsW (367 aa).

The Cytoplasmic portion of the chain corresponds to 1-8 (MRRVEGYD). The helical transmembrane segment at 9 to 29 (MIVLMMAVILTCFGVVMVYSA) threads the bilayer. Over 30-49 (SSVMAAKKFHDGFFFLKRQS) the chain is Periplasmic. A helical transmembrane segment spans residues 50-70 (LYALIGFIGMGVAMHVDYHVW). At 71–72 (KK) the chain is on the cytoplasmic side. A helical transmembrane segment spans residues 73–93 (WAVPLFLGTFFLLLLVFVPGI). Residues 94–138 (GGTAKGASRWIRLPGFNFQPSELAKVALIMYMAYSLEKRQDKLKQ) are Periplasmic-facing. A helical membrane pass occupies residues 139 to 159 (FMSGFFPYMLILGVFIAVLLA). The Cytoplasmic segment spans residues 160–161 (QH). The helical transmembrane segment at 162–182 (DMGAALTMLAVAIVMLFAAGT) threads the bilayer. Residue lysine 183 is a topological domain, periplasmic. A helical transmembrane segment spans residues 184–204 (VQYILGMGLVALPGICYLVFT). Residues 205 to 225 (KAYRMRRITAFLDPWQDPTDA) lie on the Cytoplasmic side of the membrane. A helical membrane pass occupies residues 226-246 (GFQIIQSWLALGTGGFFGQGL). The Periplasmic portion of the chain corresponds to 247–266 (GEGKQKLFYLPEAHTDFILS). The helical transmembrane segment at 267-287 (VLGEEMGFIGVVVIASMFLLL) threads the bilayer. Residues 288–304 (VQRSIRVAIAAEDSFGR) are Cytoplasmic-facing. Residues 305–325 (FLAFGIAILLGLEAFVNMAVV) form a helical membrane-spanning segment. Residues 326-335 (TGLLPTKGIA) are Periplasmic-facing. Residues 336 to 356 (LPFLSYGGSSLIISLCSVGVL) traverse the membrane as a helical segment. The Cytoplasmic portion of the chain corresponds to 357–367 (LNVSTRMRGAA).

The protein belongs to the SEDS family. FtsW subfamily.

The protein localises to the cell inner membrane. It carries out the reaction [GlcNAc-(1-&gt;4)-Mur2Ac(oyl-L-Ala-gamma-D-Glu-L-Lys-D-Ala-D-Ala)](n)-di-trans,octa-cis-undecaprenyl diphosphate + beta-D-GlcNAc-(1-&gt;4)-Mur2Ac(oyl-L-Ala-gamma-D-Glu-L-Lys-D-Ala-D-Ala)-di-trans,octa-cis-undecaprenyl diphosphate = [GlcNAc-(1-&gt;4)-Mur2Ac(oyl-L-Ala-gamma-D-Glu-L-Lys-D-Ala-D-Ala)](n+1)-di-trans,octa-cis-undecaprenyl diphosphate + di-trans,octa-cis-undecaprenyl diphosphate + H(+). The protein operates within cell wall biogenesis; peptidoglycan biosynthesis. In terms of biological role, peptidoglycan polymerase that is essential for cell division. In Geobacter sp. (strain M18), this protein is Probable peptidoglycan glycosyltransferase FtsW.